The primary structure comprises 1029 residues: Putative guanine nucleotide-exchange factor SED4 (1029 aa).

Topologically, residues 1 to 344 (MVFDSEYDLG…AMGGSNLWKS (344 aa)) are cytoplasmic. 2 WD repeats span residues 257-296 (KDYK…VIKL) and 300-339 (VHKD…MGGS). A helical; Signal-anchor for type II membrane protein membrane pass occupies residues 345 to 365 (LLRFLFNVMKLAVVVIWAHLF). The Lumenal portion of the chain corresponds to 366-1029 (YKYDLHHKLY…TQHNVINDEL (664 aa)). Residue Asn579 is glycosylated (N-linked (GlcNAc...) asparagine). Low complexity predominate over residues 579 to 592 (NASTSISIEESTNS). 3 disordered regions span residues 579 to 673 (NAST…NSIV), 710 to 732 (VVDE…VGSI), and 747 to 821 (EAVK…SQIS). Positions 593–603 (HSTFIESSSSL) are enriched in polar residues. N-linked (GlcNAc...) asparagine glycosylation is present at Asn608. The span at 613-628 (SSREISSETSIIKEDM) shows a compositional bias: basic and acidic residues. Polar residues predominate over residues 633–642 (ENVSEQSATD). 2 N-linked (GlcNAc...) asparagine glycosylation sites follow: Asn634 and Asn647. Residues 643 to 654 (KVNKNQSIDKID) show a composition bias toward basic and acidic residues. Over residues 655 to 672 (VSSSSSIPTSSEGSSNSI) the composition is skewed to low complexity. Over residues 712 to 722 (DENHSESKLPT) the composition is skewed to basic and acidic residues. Asn714, Asn754, Asn774, Asn792, Asn806, Asn855, Asn865, Asn874, Asn884, and Asn966 each carry an N-linked (GlcNAc...) asparagine glycan. Polar residues-rich tracts occupy residues 750 to 762 (KTSS…SQVT) and 771 to 782 (RVSNQSLSTVST). Positions 783–799 (EHTEMKESSNLTEKKPE) are enriched in basic and acidic residues. Positions 800 to 812 (SNSPESNLSESSL) are enriched in low complexity. Residues 858–867 (LVDSQSSNSS) show a composition bias toward low complexity. Disordered stretches follow at residues 858 to 886 (LVDS…QNET), 963 to 982 (TPEN…FMTE), and 1003 to 1029 (VAQQ…NDEL). Residues 868–886 (VKTVETNVSQDEQTSQNET) are compositionally biased toward polar residues. Residues 1026 to 1029 (NDEL) carry the Prevents secretion from ER motif.

It belongs to the WD repeat SEC12 family.

It is found in the endoplasmic reticulum membrane. The protein resides in the golgi apparatus membrane. Functionally, putative guanine nucleotide-exchange factor (GEF) involved in the formation or budding of transport vesicles from the ER. Positive regulator of SAR1 probably through inhibition of the GTPase activation by SEC23. The protein is Putative guanine nucleotide-exchange factor SED4 (SED4) of Candida glabrata (strain ATCC 2001 / BCRC 20586 / JCM 3761 / NBRC 0622 / NRRL Y-65 / CBS 138) (Yeast).